Consider the following 420-residue polypeptide: uncharacterized protein (420 aa).

The region spanning G79–S420 is the YcaO domain.

This is an uncharacterized protein from Rhizobium leguminosarum bv. trifolii.